Reading from the N-terminus, the 145-residue chain is MNKIIGFIRLEIESGKASPSPPVGPALGLRGVNIMQFCKEFNNRCKQLNIKDGVPVPTIITVYDDKTFSFKMKTPSITYFIKKHLEISKGASKPGKENFLNIDIRSLYEIAEIKKIDSNLDIKSICKSLIGSVKSMGIKTIIVKN.

It belongs to the universal ribosomal protein uL11 family.

The protein localises to the mitochondrion. This Reclinomonas americana protein is Large ribosomal subunit protein uL11m (RPL11).